Here is a 309-residue protein sequence, read N- to C-terminus: MNRLQVELPGLSLKNPIIPASGCFGFGREYAQFYDLSVLGSIMIKATTEQPRYGNPTPRVAETPGGMLNAIGLQNPGLEKVMNSELPWLEQFDLPIIANVAGSQAEDYVAVAKEISKAPNVHALELNISCPNVKTGGIAFGTNPEIAADLTKRVKEVSEVPVYVKLSPNVANIVEIAKAIENAGADGLTMINTLLGMRLDLKTAKPILANRTGGLSGPAIKPVAIRMVHEVSQAVNIPIIGMGGIETAEDVIEFFYAGASAVAVGTANFIDPFVCPTIIEELPALLDELGFDHISECQGRSWKQTCHSR.

FMN-binding positions include Ser-21 and 45–46 (KA). Substrate is bound by residues Lys-45 and 69-73 (NAIGL). FMN contacts are provided by Asn-99 and Asn-127. Asn-127 lines the substrate pocket. Cys-130 functions as the Nucleophile in the catalytic mechanism. FMN contacts are provided by Lys-165 and Ile-191. A substrate-binding site is contributed by 192 to 193 (NT). FMN-binding positions include Gly-217, 243 to 244 (GG), and 265 to 266 (GT).

Belongs to the dihydroorotate dehydrogenase family. Type 1 subfamily. As to quaternary structure, heterotetramer of 2 PyrK and 2 PyrD type B subunits. FMN is required as a cofactor.

Its subcellular location is the cytoplasm. It catalyses the reaction (S)-dihydroorotate + NAD(+) = orotate + NADH + H(+). It participates in pyrimidine metabolism; UMP biosynthesis via de novo pathway; orotate from (S)-dihydroorotate (NAD(+) route): step 1/1. Functionally, catalyzes the conversion of dihydroorotate to orotate with NAD(+) as electron acceptor. The protein is Dihydroorotate dehydrogenase B (NAD(+)), catalytic subunit (pyrD) of Bacillus cereus (strain AH187).